Reading from the N-terminus, the 366-residue chain is Ribosomal RNA large subunit methyltransferase M (366 aa).

S-adenosyl-L-methionine contacts are provided by residues Ser188, 221–224 (CPGG), Asp240, Asp260, and Asp277. Lys306 functions as the Proton acceptor in the catalytic mechanism.

This sequence belongs to the class I-like SAM-binding methyltransferase superfamily. RNA methyltransferase RlmE family. RlmM subfamily. In terms of assembly, monomer.

The protein resides in the cytoplasm. It carries out the reaction cytidine(2498) in 23S rRNA + S-adenosyl-L-methionine = 2'-O-methylcytidine(2498) in 23S rRNA + S-adenosyl-L-homocysteine + H(+). Catalyzes the 2'-O-methylation at nucleotide C2498 in 23S rRNA. This is Ribosomal RNA large subunit methyltransferase M from Shigella flexneri serotype 5b (strain 8401).